Here is a 373-residue protein sequence, read N- to C-terminus: Alginate lyase (373 aa).

The first 25 residues, 1 to 25, serve as a signal peptide directing secretion; the sequence is MRLPMQKLLIPTLLGLAMFAGSVNA. Substrate is bound by residues 66–67, 139–140, and Tyr257; these read SK and HT.

It belongs to the polysaccharide lyase 5 family.

The protein localises to the periplasm. It carries out the reaction Eliminative cleavage of alginate to give oligosaccharides with 4-deoxy-alpha-L-erythro-hex-4-enuronosyl groups at their non-reducing ends and beta-D-mannuronate at their reducing end.. Functionally, catalyzes the depolymerization of alginate by cleaving the beta-1,4 glycosidic bond between two adjacent sugar residues via a beta-elimination mechanism. May serve to degrade mislocalized alginate that is trapped in the periplasmic space. This chain is Alginate lyase, found in Pseudomonas fluorescens.